The sequence spans 84 residues: Kunitz-type serine protease inhibitor B4 (84 aa).

The signal sequence occupies residues 1–24 (MSSGGLLLLLGLLTLWAELTPISG). The region spanning 31–81 (CNLAPESGRCRGHLRRIYYNLESNKCEVFFYGGCGGNDNNFSTWDECRHTC) is the BPTI/Kunitz inhibitor domain. 3 disulfides stabilise this stretch: cysteine 31/cysteine 81, cysteine 40/cysteine 64, and cysteine 56/cysteine 77. Asparagine 70 carries N-linked (GlcNAc...) asparagine glycosylation.

It belongs to the venom Kunitz-type family. Expressed by the venom gland.

It is found in the secreted. In terms of biological role, serine protease inhibitor that inhibits plasmin and trypsin. The sequence is that of Kunitz-type serine protease inhibitor B4 from Daboia siamensis (Eastern Russel's viper).